Here is a 436-residue protein sequence, read N- to C-terminus: Trigger factor (436 aa).

Positions 161–246 constitute a PPIase FKBP-type domain; that stretch reads GDQLNIDFVG…VNSVSEAELP (86 aa).

Belongs to the FKBP-type PPIase family. Tig subfamily.

The protein resides in the cytoplasm. It catalyses the reaction [protein]-peptidylproline (omega=180) = [protein]-peptidylproline (omega=0). Involved in protein export. Acts as a chaperone by maintaining the newly synthesized protein in an open conformation. Functions as a peptidyl-prolyl cis-trans isomerase. In Azotobacter vinelandii (strain DJ / ATCC BAA-1303), this protein is Trigger factor.